A 241-amino-acid polypeptide reads, in one-letter code: Pyridoxine 5'-phosphate synthase (241 aa).

Residue Asn-7 participates in 3-amino-2-oxopropyl phosphate binding. 1-deoxy-D-xylulose 5-phosphate is bound at residue 9–10 (DH). Arg-18 is a binding site for 3-amino-2-oxopropyl phosphate. His-43 functions as the Proton acceptor in the catalytic mechanism. 2 residues coordinate 1-deoxy-D-xylulose 5-phosphate: Arg-45 and His-50. The active-site Proton acceptor is Glu-70. Thr-100 provides a ligand contact to 1-deoxy-D-xylulose 5-phosphate. Catalysis depends on His-191, which acts as the Proton donor. Residues Gly-192 and 213 to 214 (GH) contribute to the 3-amino-2-oxopropyl phosphate site.

It belongs to the PNP synthase family. In terms of assembly, homooctamer; tetramer of dimers.

The protein localises to the cytoplasm. The catalysed reaction is 3-amino-2-oxopropyl phosphate + 1-deoxy-D-xylulose 5-phosphate = pyridoxine 5'-phosphate + phosphate + 2 H2O + H(+). It participates in cofactor biosynthesis; pyridoxine 5'-phosphate biosynthesis; pyridoxine 5'-phosphate from D-erythrose 4-phosphate: step 5/5. Catalyzes the complicated ring closure reaction between the two acyclic compounds 1-deoxy-D-xylulose-5-phosphate (DXP) and 3-amino-2-oxopropyl phosphate (1-amino-acetone-3-phosphate or AAP) to form pyridoxine 5'-phosphate (PNP) and inorganic phosphate. This chain is Pyridoxine 5'-phosphate synthase, found in Solidesulfovibrio magneticus (strain ATCC 700980 / DSM 13731 / RS-1) (Desulfovibrio magneticus).